Here is a 271-residue protein sequence, read N- to C-terminus: MSRELIRTADAWNKVKIARDPNRPNAKFYINEIFDEFIELHGDRNFGDDKAIIGGIALLNNLSFTVVGICKGENTKENIKRNFGMPHPEGYRKALRLMKQAEKFKRPVICFVDTPGAFCGIGAEERGQGQAIAQNLVELMGLKVPLISIVIGEGGSGGALALAVADKVFMLEHSIYSVLSPEGFASILWKDSSRAEEAASVMKITAQDLKSFNIIDKIIKEPRGGAHKNPIKMAQNIKKTILEALGEMKGTDLDTLLNERYNKYRNIENNL.

Residues 1-247 (MSRELIRTAD…KKTILEALGE (247 aa)) form the CoA carboxyltransferase C-terminal domain.

It belongs to the AccA family. Acetyl-CoA carboxylase is a heterohexamer composed of biotin carboxyl carrier protein (AccB), biotin carboxylase (AccC) and two subunits each of ACCase subunit alpha (AccA) and ACCase subunit beta (AccD).

It localises to the cytoplasm. The catalysed reaction is N(6)-carboxybiotinyl-L-lysyl-[protein] + acetyl-CoA = N(6)-biotinyl-L-lysyl-[protein] + malonyl-CoA. It functions in the pathway lipid metabolism; malonyl-CoA biosynthesis; malonyl-CoA from acetyl-CoA: step 1/1. In terms of biological role, component of the acetyl coenzyme A carboxylase (ACC) complex. First, biotin carboxylase catalyzes the carboxylation of biotin on its carrier protein (BCCP) and then the CO(2) group is transferred by the carboxyltransferase to acetyl-CoA to form malonyl-CoA. In Clostridium perfringens (strain 13 / Type A), this protein is Acetyl-coenzyme A carboxylase carboxyl transferase subunit alpha.